Consider the following 305-residue polypeptide: Ribonuclease BN (305 aa).

Positions 64, 66, 68, 69, 141, 212, and 270 each coordinate Zn(2+). The Proton acceptor role is filled by Asp68.

It belongs to the RNase Z family. RNase BN subfamily. As to quaternary structure, homodimer. Requires Zn(2+) as cofactor.

Zinc phosphodiesterase, which has both exoribonuclease and endoribonuclease activities. This Escherichia coli O127:H6 (strain E2348/69 / EPEC) protein is Ribonuclease BN.